Consider the following 439-residue polypeptide: Vacuolar protein sorting-associated protein 4 (439 aa).

The 68-residue stretch at 8 to 75 folds into the MIT domain; the sequence is LSKGIDLVQK…TRAEQLKDHL (68 aa). Residues 76–113 are disordered; that stretch reads EKQAQNKSTAESSVNGSTKAKKSNGDGNGSGDDNDDAD. Residues 80-93 show a composition bias toward polar residues; the sequence is QNKSTAESSVNGST. Residue 175–182 participates in ATP binding; the sequence is GPPGTGKS.

Belongs to the AAA ATPase family. Monomer or homodimer (in nucleotide-free form). Decamer, dodecamer or tetradecamer of two stacked respective homooligomeric rings (when bound to ATP); the dodecameric form seems to be predominant.

It is found in the endosome membrane. Functionally, pre-vacuolar protein sorting protein involved in the transport of biosynthetic membrane proteins from the prevacuolar/endosomal compartment to the vacuole. Required for multivesicular body (MVB) protein sorting. Catalyzes the ATP-dependent dissociation of class E VPS proteins from endosomal membranes, such as the disassembly of the ESCRT-III complex. Required for extracellular secretion of the secreted aspartyl proteases SAP2, SAP4, SAP5, and SAP6. Its regulation of the pre-vacuolar secretory pathway is critical for virulence. In Candida albicans (strain SC5314 / ATCC MYA-2876) (Yeast), this protein is Vacuolar protein sorting-associated protein 4.